The following is a 351-amino-acid chain: UDP-N-acetylglucosamine--N-acetylmuramyl-(pentapeptide) pyrophosphoryl-undecaprenol N-acetylglucosamine transferase (351 aa).

Residues 13–15 (TGG), Asn125, Arg161, Ser189, Ile241, 260–265 (ALTVCE), and Gln285 each bind UDP-N-acetyl-alpha-D-glucosamine.

Belongs to the glycosyltransferase 28 family. MurG subfamily.

It is found in the cell inner membrane. It carries out the reaction di-trans,octa-cis-undecaprenyl diphospho-N-acetyl-alpha-D-muramoyl-L-alanyl-D-glutamyl-meso-2,6-diaminopimeloyl-D-alanyl-D-alanine + UDP-N-acetyl-alpha-D-glucosamine = di-trans,octa-cis-undecaprenyl diphospho-[N-acetyl-alpha-D-glucosaminyl-(1-&gt;4)]-N-acetyl-alpha-D-muramoyl-L-alanyl-D-glutamyl-meso-2,6-diaminopimeloyl-D-alanyl-D-alanine + UDP + H(+). It participates in cell wall biogenesis; peptidoglycan biosynthesis. Cell wall formation. Catalyzes the transfer of a GlcNAc subunit on undecaprenyl-pyrophosphoryl-MurNAc-pentapeptide (lipid intermediate I) to form undecaprenyl-pyrophosphoryl-MurNAc-(pentapeptide)GlcNAc (lipid intermediate II). The protein is UDP-N-acetylglucosamine--N-acetylmuramyl-(pentapeptide) pyrophosphoryl-undecaprenol N-acetylglucosamine transferase of Haemophilus influenzae (strain 86-028NP).